The following is a 334-amino-acid chain: S-adenosylmethionine decarboxylase proenzyme (334 aa).

Residue phenylalanine 7 participates in substrate binding. Residues glutamate 8 and glutamate 11 contribute to the active site. Glutamate 67 contacts substrate. The active-site Schiff-base intermediate with substrate; via pyruvic acid is serine 68. Residue serine 68 is modified to Pyruvic acid (Ser); by autocatalysis. Cysteine 82 acts as the Proton donor; for catalytic activity in catalysis. Phenylalanine 223 is a binding site for substrate. Residues serine 229 and histidine 243 each act as proton acceptor; for processing activity in the active site. Residue glutamate 247 coordinates substrate. Position 298 is a phosphoserine (serine 298).

This sequence belongs to the eukaryotic AdoMetDC family. In terms of assembly, heterotetramer of two alpha and two beta chains. It depends on pyruvate as a cofactor. In terms of processing, is synthesized initially as an inactive proenzyme. Formation of the active enzyme involves a self-maturation process in which the active site pyruvoyl group is generated from an internal serine residue via an autocatalytic post-translational modification. Two non-identical subunits are generated from the proenzyme in this reaction, and the pyruvate is formed at the N-terminus of the alpha chain, which is derived from the carboxyl end of the proenzyme. The post-translation cleavage follows an unusual pathway, termed non-hydrolytic serinolysis, in which the side chain hydroxyl group of the serine supplies its oxygen atom to form the C-terminus of the beta chain, while the remainder of the serine residue undergoes an oxidative deamination to produce ammonia and the pyruvoyl group blocking the N-terminus of the alpha chain.

It carries out the reaction S-adenosyl-L-methionine + H(+) = S-adenosyl 3-(methylsulfanyl)propylamine + CO2. Its pathway is amine and polyamine biosynthesis; S-adenosylmethioninamine biosynthesis; S-adenosylmethioninamine from S-adenosyl-L-methionine: step 1/1. In terms of biological role, essential for biosynthesis of the polyamines spermidine and spermine. Promotes maintenance and self-renewal of embryonic stem cells, by maintaining spermine levels. This chain is S-adenosylmethionine decarboxylase proenzyme (AMD1), found in Bos taurus (Bovine).